The chain runs to 893 residues: Alanine--tRNA ligase (893 aa).

Belongs to the class-II aminoacyl-tRNA synthetase family.

The protein localises to the cytoplasm. It carries out the reaction tRNA(Ala) + L-alanine + ATP = L-alanyl-tRNA(Ala) + AMP + diphosphate. Functionally, catalyzes the attachment of alanine to tRNA(Ala) in a two-step reaction: alanine is first activated by ATP to form Ala-AMP and then transferred to the acceptor end of tRNA(Ala). Also edits incorrectly charged Ser-tRNA(Ala) and Gly-tRNA(Ala) via its editing domain. This chain is Alanine--tRNA ligase (alaS), found in Leuconostoc mesenteroides subsp. mesenteroides (strain ATCC 8293 / DSM 20343 / BCRC 11652 / CCM 1803 / JCM 6124 / NCDO 523 / NBRC 100496 / NCIMB 8023 / NCTC 12954 / NRRL B-1118 / 37Y).